The chain runs to 244 residues: 7-cyano-7-deazaguanine synthase (244 aa).

ATP is bound at residue 14-24; sequence FSGGQDSATCV. Residues C202, C217, C220, and C223 each contribute to the Zn(2+) site.

Belongs to the QueC family. Zn(2+) is required as a cofactor.

It catalyses the reaction 7-carboxy-7-deazaguanine + NH4(+) + ATP = 7-cyano-7-deazaguanine + ADP + phosphate + H2O + H(+). It participates in purine metabolism; 7-cyano-7-deazaguanine biosynthesis. Its function is as follows. Catalyzes the ATP-dependent conversion of 7-carboxy-7-deazaguanine (CDG) to 7-cyano-7-deazaguanine (preQ(0)). This is 7-cyano-7-deazaguanine synthase from Burkholderia cenocepacia (strain HI2424).